A 342-amino-acid polypeptide reads, in one-letter code: MTHKIAILGASGYTGAELVRLIAEHPNMEIVALSGERKAGQSMAEVFPHLRHLDLPVLCKIDEIDFAGVDLCFCALPHKTSQEVIRALPATLKIVDLSADFRLRDPEAYRTWYGNEHVALEQQAEAVYGLTEFYRDQIRTARLVAGTGCNAATGQYVLRPLIAAGVIDLDEIILDLKCAVSGAGRSLKENLLHAELSEGANAYAVGGTHRHLGEFDQEFSALAGRPVQVQFTPHLIPANRGILATTYVRGDAQTVFQTLAAAYADEPFVHVLPFGETPSTHHVRGSNHCHIGVTGDRIAGRAIVIAALDNLTKGSSGQALQNANLMLGETETTGLTMAPLFP.

The active site involves Cys149.

This sequence belongs to the NAGSA dehydrogenase family. Type 1 subfamily.

It is found in the cytoplasm. The enzyme catalyses N-acetyl-L-glutamate 5-semialdehyde + phosphate + NADP(+) = N-acetyl-L-glutamyl 5-phosphate + NADPH + H(+). It functions in the pathway amino-acid biosynthesis; L-arginine biosynthesis; N(2)-acetyl-L-ornithine from L-glutamate: step 3/4. Its function is as follows. Catalyzes the NADPH-dependent reduction of N-acetyl-5-glutamyl phosphate to yield N-acetyl-L-glutamate 5-semialdehyde. The sequence is that of N-acetyl-gamma-glutamyl-phosphate reductase from Ruegeria pomeroyi (strain ATCC 700808 / DSM 15171 / DSS-3) (Silicibacter pomeroyi).